Here is a 941-residue protein sequence, read N- to C-terminus: Ankyrin repeat and MYND domain-containing protein 1 (941 aa).

MORN repeat units lie at residues 2–24, 25–47, and 70–92; these read YQGEFGLNMKLGYGKFSWPTGES, YHGQFYRDHCHGLGTYMWPDGSS, and FQGLYKADQRFGPGVETYPDGSQ. ANK repeat units lie at residues 292–321, 513–542, 545–574, 581–613, 657–691, 694–723, and 737–766; these read KGYTVLAAAATHCHNDIVNLLLDCGADVNK, MRRMALSMIERRKRWRTIKLLLRRGADPNL, VPMQVLFLAVKAGDVDGVRLLLEHGARTDI, STLTPLHIAAALPGEEGVQIVELLLHAITDVDA, GGRTALHMACEREDDNKCARDIVRLLLSHGANPNL, SGHSPLSLSIASGNELVVKELLTQGADPNL, and CDLTYEHQRNMDSKLALIDRLISHGADILK. Zn(2+)-binding residues include cysteine 880, cysteine 883, cysteine 894, cysteine 897, cysteine 903, cysteine 907, histidine 916, and cysteine 920. The MYND-type zinc finger occupies 880 to 920; the sequence is CYQCGRSIGVRLLPCPRCYGILTCSKYCKTKAWTEFHKKDC.

The sequence is that of Ankyrin repeat and MYND domain-containing protein 1 (ANKMY1) from Homo sapiens (Human).